A 182-amino-acid chain; its full sequence is Ribosome-recycling factor (182 aa).

The protein belongs to the RRF family.

Its subcellular location is the cytoplasm. Functionally, responsible for the release of ribosomes from messenger RNA at the termination of protein biosynthesis. May increase the efficiency of translation by recycling ribosomes from one round of translation to another. The chain is Ribosome-recycling factor from Synechococcus sp. (strain CC9605).